The primary structure comprises 367 residues: Putative F-box/kelch-repeat protein At4g39600 (367 aa).

The 47-residue stretch at 11–57 folds into the F-box domain; that stretch reads ATSNPSLPEDLVVSCLARVSRLYYPTLSLVSKSFRSLIASPDLYKTR. Kelch repeat units follow at residues 127–171 and 172–216; these read HLYA…LDGK and MYLA…EGKI.

The polypeptide is Putative F-box/kelch-repeat protein At4g39600 (Arabidopsis thaliana (Mouse-ear cress)).